Here is a 74-residue protein sequence, read N- to C-terminus: Histone H1.C8/H1.M1 (74 aa).

Residues 1 to 74 (MSDAAVPPKK…KAVKKAPKKK (74 aa)) are disordered. Positions 11-74 (ASPKKAAAKK…KAVKKAPKKK (64 aa)) are enriched in basic residues.

It is found in the nucleus. It localises to the chromosome. The polypeptide is Histone H1.C8/H1.M1 (Trypanosoma cruzi).